The chain runs to 2174 residues: Spectinabilin polyketide synthase system protein NorB (2174 aa).

The region spanning 34-459 (REPVAVVAMG…GTNAHVILEQ (426 aa)) is the Ketosynthase family 3 (KS3) domain. Active-site for beta-ketoacyl synthase activity residues include Cys206, His341, and His381. The region spanning 567–888 (FLFSGQGSQR…AAVSRAFVQG (322 aa)) is the Malonyl-CoA:ACP transacylase (MAT) domain. The interval 938-1060 (HPLLGACLEL…GQLAPEAAAP (123 aa)) is N-terminal hotdog fold. Residues 938 to 1212 (HPLLGACLEL…TRPITAGQLR (275 aa)) form the PKS/mFAS DH domain. His970 serves as the catalytic Proton acceptor; for dehydratase activity. The interval 1056-1075 (EAAAPPAAPGEDWPPPGAEP) is disordered. Residues 1061 to 1074 (PAAPGEDWPPPGAE) show a composition bias toward pro residues. The segment at 1073 to 1212 (AEPVPLEGFY…TRPITAGQLR (140 aa)) is C-terminal hotdog fold. The Proton donor; for dehydratase activity role is filled by Asp1134. The Enoyl reductase (ER) domain occupies 1424–1726 (GTVDDLVLAP…QARNVGKLVL (303 aa)). A Ketoreductase (KR) domain is found at 1736–1915 (GTILVTGGYG…ATALAWGMWA (180 aa)). The 76-residue stretch at 2017 to 2092 (PAVRELVRGQ…ALTDAIEARL (76 aa)) folds into the Carrier domain. Residue Ser2052 is modified to O-(pantetheine 4'-phosphoryl)serine.

The spectinabilin polyketide synthase complex is composed of 4 proteins, NorA, NorA', NorB and NorC. The complex comprises 6 modules with a total of 28 catalytic domains catalyzing 7 chain elongations. NorA comprises one module, NorA' two modules, NorB one module and NorC two modules. Pantetheine 4'-phosphate serves as cofactor.

It carries out the reaction 4-nitrobenzoyl-CoA + 6 (S)-methylmalonyl-CoA + malonyl-CoA + 6 NADPH + 12 H(+) = demethyldeoxyspectinabilin + 7 CO2 + 6 NADP(+) + 8 CoA + 5 H2O. The protein operates within antibiotic biosynthesis. Its pathway is polyketide biosynthesis. Its function is as follows. Component of a type I modular polyketide synthase (PKS) that generates the backbone of the antibiotic spectinabilin (also known as neoaureothin), a nitroaryl-substituted polyketide metabolite. This PKS system accepts the unusual starter unit 4-nitrobenzoyl-CoA and extends it by 6 molecules of (S)-methylmalonyl-CoA and a single molecule of malonyl-CoA. The polypeptide is Spectinabilin polyketide synthase system protein NorB (Streptomyces orinoci (Streptoverticillium orinoci)).